A 124-amino-acid chain; its full sequence is Protein MGF 110-4L-B (124 aa).

A signal peptide spans Met1–Gly18. Asn64 carries an N-linked (GlcNAc...) asparagine; by host glycan. The short motif at Lys121 to Leu124 is the Prevents secretion from ER element.

Belongs to the asfivirus MGF 110 family.

The protein localises to the virion. It is found in the host endoplasmic reticulum-Golgi intermediate compartment. In terms of biological role, causes the redistribution of lumenal ER protein to an enlarged ERGIC compartment. In African swine fever virus (isolate Portugal/Lis 57/1957) (ASFV), this protein is Protein MGF 110-4L-B.